Here is a 239-residue protein sequence, read N- to C-terminus: Probable transcriptional regulatory protein BCG9842_B4761 (239 aa).

It belongs to the TACO1 family. YeeN subfamily.

The protein localises to the cytoplasm. In Bacillus cereus (strain G9842), this protein is Probable transcriptional regulatory protein BCG9842_B4761.